The sequence spans 138 residues: Small ribosomal subunit protein uS11c (138 aa).

Belongs to the universal ribosomal protein uS11 family. As to quaternary structure, part of the 30S ribosomal subunit.

Its subcellular location is the plastid. It is found in the chloroplast. The chain is Small ribosomal subunit protein uS11c from Nandina domestica (Heavenly bamboo).